A 194-amino-acid polypeptide reads, in one-letter code: Fibroblast growth factor 7 (194 aa).

The first 31 residues, 1–31, serve as a signal peptide directing secretion; sequence MRKWILTWILPSLLYRSCFHIICLVGTISLA. An N-linked (GlcNAc...) asparagine glycan is attached at Asn-45.

It belongs to the heparin-binding growth factors family. In terms of assembly, interacts with FGFBP1. Interacts with FGFR2. Affinity between fibroblast growth factors (FGFs) and their receptors is increased by heparan sulfate glycosaminoglycans that function as coreceptors.

It localises to the secreted. In terms of biological role, plays an important role in the regulation of embryonic development, cell proliferation and cell differentiation. Required for normal branching morphogenesis. Growth factor active on keratinocytes. Possible major paracrine effector of normal epithelial cell proliferation. The protein is Fibroblast growth factor 7 (FGF7) of Cervus elaphus (Red deer).